A 539-amino-acid polypeptide reads, in one-letter code: Phosphoenolpyruvate carboxykinase (ATP) (539 aa).

Positions 64, 206, and 212 each coordinate substrate. ATP contacts are provided by residues Lys-212, His-231, and 247-255 (GLSGTGKTT). Mn(2+) is bound by residues Lys-212 and His-231. Asp-268 contacts Mn(2+). ATP-binding positions include Glu-296, Arg-332, 448–449 (RI), and Thr-454. Arg-332 is a binding site for substrate.

It belongs to the phosphoenolpyruvate carboxykinase (ATP) family. In terms of assembly, monomer. Requires Mn(2+) as cofactor.

It is found in the cytoplasm. The catalysed reaction is oxaloacetate + ATP = phosphoenolpyruvate + ADP + CO2. Its pathway is carbohydrate biosynthesis; gluconeogenesis. Functionally, involved in the gluconeogenesis. Catalyzes the conversion of oxaloacetate (OAA) to phosphoenolpyruvate (PEP) through direct phosphoryl transfer between the nucleoside triphosphate and OAA. This is Phosphoenolpyruvate carboxykinase (ATP) from Sodalis glossinidius (strain morsitans).